Reading from the N-terminus, the 78-residue chain is Putative membrane protein insertion efficiency factor (78 aa).

This sequence belongs to the UPF0161 family.

It localises to the cell inner membrane. Its function is as follows. Could be involved in insertion of integral membrane proteins into the membrane. The sequence is that of Putative membrane protein insertion efficiency factor from Prochlorococcus marinus (strain MIT 9301).